A 519-amino-acid polypeptide reads, in one-letter code: MDKLTATLAKVNYPSEVENGSMLLVVTLVILFLWFIIPSPVKRSNVSVPTVTLFNPYLPEFLSRVWFNSTAATVIYKGYRQHKDRAFRLLKPDGDIIVLSNKYVEELRQLPLTTLNALEAVFEDHVGKYTTILDDSHLHTEVIQKRLTPAINRLIPRIIDELDHGFAVEMPECEDKWVLIRPYEVFLRLVARAGARVFVGPDFCRTEKWLTASIDFTKNIFMTITLLRPIPSFLHPIIGPMLPSSRSLDTQLRYVQDELLGPEIVKRRQRQASGDPDYEKPDDFLQWMIDLAQNDKEGDPGNIAHRLLGLTSMAVVHTSAMSITHGLYDLITMAQWLEPLRQEIQEAMPDWKSSSYSSLVSLRRLDSFLKESQRFNPPGELSFHRVVKKDLVLSDGLRLPKGTHICMASGPIGMDTKYVSDPTTFDAFRYVDGDKAQSQFVHTSATSMHFGLGRYACPGRFFATFVLKAILSRFLVEYEFRFGPDQVGRPKNMLLGDKIVPNTSVDVYVRKRTGSRSTA.

Residues 21–41 (SMLLVVTLVILFLWFIIPSPV) traverse the membrane as a helical segment. Cysteine 457 is a binding site for heme.

It belongs to the cytochrome P450 family. It depends on heme as a cofactor.

It localises to the membrane. It functions in the pathway secondary metabolite biosynthesis. Its function is as follows. Cytochrome P450 monooxygenase; part of the ATM2 gene cluster that mediates the biosynthesis of aflatrem, a tremorgenic mycotoxin with acute neurotoxic effects. Synthesis of geranylgeranyl diphosphate (GGPP) by AtmG (a GGPP synthase) precedes condensation of GGPP with indole 3-glycerol phosphate, followed by epoxidation and cyclization by AtmM (a FAD-dependent monooxygenase) and AtmC (a prenyltransferase) to produce paspaline. AtmB is also essential for paspaline production, but its exact role has not been identified yet. AtmP, a cytochrome P450 monooxygenase, subsequently converts paspaline to 13-desoxypaxilline via PC-M6 by removal of the C-30 methyl group and oxidation at C-10. AtmQ, a cytochrome P450 monooxygenase, then catalyzes the oxidation of 13-desoxypaxilline, first at C-7 to produce paspalicine and then at C-13 to form paspalinine. Finally, AtmD prenylates paspalinine to form aflatrem. The polypeptide is Cytochrome P450 monooxygenase AtmP (Aspergillus flavus).